The primary structure comprises 674 residues: Protein asunder (674 aa).

Residues 516-538 (HKAKDQYRLLYRELEQLIQLNAS) are a coiled coil. The segment at 560 to 579 (PSKSEAGTANLRSFTESPLS) is disordered. The segment covering 564 to 577 (EAGTANLRSFTESP) has biased composition (polar residues). Positions 601 to 607 (LKASKRR) match the Nuclear localization signal (NLS) motif.

This sequence belongs to the Integrator subunit 13 family. Belongs to the multiprotein complex Integrator, at least composed of IntS1, IntS2, IntS3, IntS4, omd/IntS5, IntS6, defl/IntS7, IntS8, IntS9, IntS10, IntS11, IntS12, asun/IntS13, IntS14 and IntS15. The core complex associates with protein phosphatase 2A subunits mts/PP2A and Pp2A-29B, to form the Integrator-PP2A (INTAC) complex. Phosphorylated.

The protein resides in the nucleus. It localises to the cytoplasm. The protein localises to the perinuclear region. In terms of biological role, component of the integrator complex, a multiprotein complex that terminates RNA polymerase II (Pol II) transcription in the promoter-proximal region of genes. The integrator complex provides a quality checkpoint during transcription elongation by driving premature transcription termination of transcripts that are unfavorably configured for transcriptional elongation: the complex terminates transcription by (1) catalyzing dephosphorylation of the C-terminal domain (CTD) of Pol II subunit Polr2A/Rbp1 and Spt5, and (2) degrading the exiting nascent RNA transcript via endonuclease activity. The integrator complex is also involved in the 3'-end processing of the U7 snRNA, and also the spliceosomal snRNAs U1, U2, U4 and U5. The sequence is that of Protein asunder (asun) from Drosophila pseudoobscura pseudoobscura (Fruit fly).